The following is a 431-amino-acid chain: 4-hydroxy-3-methylbut-2-en-1-yl diphosphate synthase (flavodoxin) (431 aa).

[4Fe-4S] cluster is bound by residues cysteine 310, cysteine 313, cysteine 356, and glutamate 363.

Belongs to the IspG family. It depends on [4Fe-4S] cluster as a cofactor.

It catalyses the reaction (2E)-4-hydroxy-3-methylbut-2-enyl diphosphate + oxidized [flavodoxin] + H2O + 2 H(+) = 2-C-methyl-D-erythritol 2,4-cyclic diphosphate + reduced [flavodoxin]. It participates in isoprenoid biosynthesis; isopentenyl diphosphate biosynthesis via DXP pathway; isopentenyl diphosphate from 1-deoxy-D-xylulose 5-phosphate: step 5/6. Its function is as follows. Converts 2C-methyl-D-erythritol 2,4-cyclodiphosphate (ME-2,4cPP) into 1-hydroxy-2-methyl-2-(E)-butenyl 4-diphosphate. The sequence is that of 4-hydroxy-3-methylbut-2-en-1-yl diphosphate synthase (flavodoxin) from Rhodopseudomonas palustris (strain HaA2).